Reading from the N-terminus, the 184-residue chain is Gremlin-1 (184 aa).

A signal peptide spans 1 to 24; sequence MNRTAYTVGALLLLLGTLLPAAEG. N-linked (GlcNAc...) asparagine glycosylation is found at Asn-2 and Asn-42. The disordered stretch occupies residues 24–78; that stretch reads GKKKGSQGAIPPPDKAQHNDSEQTQSPPQPGSRTRGRGQGRGTAMPGEEVLESSQ. 4 disulfides stabilise this stretch: Cys-94–Cys-144, Cys-108–Cys-158, Cys-118–Cys-176, and Cys-122–Cys-178. Positions 94–184 constitute a CTCK domain; it reads CKTQPLKQTI…QCRCISIDLD (91 aa).

The protein belongs to the DAN family. As to quaternary structure, homodimer; can also form homooligomers. Interacts with BMP2; can form higher oligomers with BMP2. Interacts with SLIT1 and SLIT2 in a glycosylation-dependent manner. As to expression, highly expressed in the brain, kidney, spleen, and testis and weakly expressed in the lung and liver. Predominantly expressed in differentiated cells as neurons in brain, type I cells in lung and globlet cells in intestine.

Its subcellular location is the secreted. Cytokine that may play an important role during carcinogenesis and metanephric kidney organogenesis, as a BMP antagonist required for early limb outgrowth and patterning in maintaining the FGF4-SHH feedback loop. Down-regulates the BMP4 signaling in a dose-dependent manner. Antagonist of BMP2; inhibits BMP2-mediated differentiation of osteoblasts (in vitro). Acts as inhibitor of monocyte chemotaxis. Can inhibit the growth or viability of normal cells but not transformed cells when is overexpressed. In Rattus norvegicus (Rat), this protein is Gremlin-1 (Grem1).